We begin with the raw amino-acid sequence, 261 residues long: Imidazole glycerol phosphate synthase subunit HisF (261 aa).

Residues Asp-16 and Asp-135 contribute to the active site.

This sequence belongs to the HisA/HisF family. In terms of assembly, heterodimer of HisH and HisF.

The protein resides in the cytoplasm. The catalysed reaction is 5-[(5-phospho-1-deoxy-D-ribulos-1-ylimino)methylamino]-1-(5-phospho-beta-D-ribosyl)imidazole-4-carboxamide + L-glutamine = D-erythro-1-(imidazol-4-yl)glycerol 3-phosphate + 5-amino-1-(5-phospho-beta-D-ribosyl)imidazole-4-carboxamide + L-glutamate + H(+). It functions in the pathway amino-acid biosynthesis; L-histidine biosynthesis; L-histidine from 5-phospho-alpha-D-ribose 1-diphosphate: step 5/9. Its function is as follows. IGPS catalyzes the conversion of PRFAR and glutamine to IGP, AICAR and glutamate. The HisF subunit catalyzes the cyclization activity that produces IGP and AICAR from PRFAR using the ammonia provided by the HisH subunit. The protein is Imidazole glycerol phosphate synthase subunit HisF of Mycobacterium leprae (strain Br4923).